Here is a 90-residue protein sequence, read N- to C-terminus: Protein LURE 1.2 (90 aa).

An N-terminal signal peptide occupies residues 1-19 (MKLPIIFLTLLIFVSSCTS). Asparagine 23 is a glycosylation site (N-linked (GlcNAc...) asparagine). 3 disulfides stabilise this stretch: cysteine 58-cysteine 75, cysteine 61-cysteine 82, and cysteine 65-cysteine 84. The interval 67-87 (RRGKYIRTCSFERKLCRCSIS) is PRK6 binding.

Belongs to the DEFL family. As to quaternary structure, interacts with MDIS1, MIK1, MIK2 and TDR/PXY, but not with MDIS2. Binds to PRK6 LRRs. In terms of tissue distribution, expressed in the pistil. Detected exclusively in the synergid cells.

It localises to the secreted. Its function is as follows. Pollen tube attractants guiding pollen tubes to the ovular micropyle. Attracts specifically pollen tubes from A.thaliana, but not those from A.lyrata. Triggers endocytosis of MDIS1 in the pollen tube tip. This chain is Protein LURE 1.2, found in Arabidopsis thaliana (Mouse-ear cress).